A 156-amino-acid polypeptide reads, in one-letter code: EPIDERMAL PATTERNING FACTOR-like protein 6 (156 aa).

An N-terminal signal peptide occupies residues 1–47 (MGFERTSSSLSLLSSSLPSSLQPSENTRAKFSLFYLLLLFFVLCVIA). 3 cysteine pairs are disulfide-bonded: Cys-113–Cys-147, Cys-117–Cys-123, and Cys-120–Cys-149.

Belongs to the plant cysteine rich small secretory peptide family. Epidermal patterning factor subfamily. In terms of assembly, interacts with ERECTA. In terms of tissue distribution, expressed in the internal layers of the root, hypocotyl and stems, and in the midrib of developing rosette leaves. Detected in a ring of cells surrounding the vascular elements. Expressed in developing stems soon after bolting, in inflorescence stems, near the root apex and in the chalazal region of ovules. Not found in cotyledons or in stomatal precursors or stomata.

It is found in the secreted. In terms of biological role, acts primarily as positive regulator of inflorescence growth. Endodermal expression is sufficient for proper inflorescence architecture. Redundantly involved with EPFL4 in procambial development regulation. Also acts as tissue-specific regulator of epidermal pattern. Controls stomatal patterning by repressing stomatal production. TMM (AC Q9SSD1) functions to dampen or block CHAL signaling. Not processed by SDD1 (AC O64495). Acts as growth-regulatory ligand for ERECTA family receptors. In Arabidopsis thaliana (Mouse-ear cress), this protein is EPIDERMAL PATTERNING FACTOR-like protein 6.